The chain runs to 88 residues: Sec-independent protein translocase protein TatA (88 aa).

The chain crosses the membrane as a helical span at residues 1–21 (MNLGPTEILLILVIVVLLFGA). Positions 46-56 (SNDDQRYEEQQ) are enriched in basic and acidic residues. A disordered region spans residues 46 to 88 (SNDDQRYEEQQQQRQIAAQAQQQVVNPVEIPQPQPTDIQRPQQ). A compositionally biased stretch (low complexity) spans 57 to 68 (QQRQIAAQAQQQ).

It belongs to the TatA/E family. As to quaternary structure, the Tat system comprises two distinct complexes: a TatABC complex, containing multiple copies of TatA, TatB and TatC subunits, and a separate TatA complex, containing only TatA subunits. Substrates initially bind to the TatABC complex, which probably triggers association of the separate TatA complex to form the active translocon.

It is found in the cell membrane. Part of the twin-arginine translocation (Tat) system that transports large folded proteins containing a characteristic twin-arginine motif in their signal peptide across membranes. TatA could form the protein-conducting channel of the Tat system. This chain is Sec-independent protein translocase protein TatA, found in Corynebacterium diphtheriae (strain ATCC 700971 / NCTC 13129 / Biotype gravis).